The chain runs to 217 residues: 3,4-dihydroxy-2-butanone 4-phosphate synthase (217 aa).

D-ribulose 5-phosphate-binding positions include Arg-37 to Glu-38, Asp-42, Arg-150 to Thr-154, and Glu-174. Glu-38 contacts Mg(2+). His-153 lines the Mg(2+) pocket.

The protein belongs to the DHBP synthase family. In terms of assembly, homodimer. Requires Mg(2+) as cofactor. It depends on Mn(2+) as a cofactor.

The enzyme catalyses D-ribulose 5-phosphate = (2S)-2-hydroxy-3-oxobutyl phosphate + formate + H(+). It participates in cofactor biosynthesis; riboflavin biosynthesis; 2-hydroxy-3-oxobutyl phosphate from D-ribulose 5-phosphate: step 1/1. Functionally, catalyzes the conversion of D-ribulose 5-phosphate to formate and 3,4-dihydroxy-2-butanone 4-phosphate. This Desulforamulus reducens (strain ATCC BAA-1160 / DSM 100696 / MI-1) (Desulfotomaculum reducens) protein is 3,4-dihydroxy-2-butanone 4-phosphate synthase.